The primary structure comprises 477 residues: Ankyrin repeat, SAM and basic leucine zipper domain-containing protein 1 (477 aa).

A phosphoserine mark is found at serine 17, serine 18, and serine 20. 6 ANK repeats span residues 46-76 (EKKE…SVDA), 80-109 (YGWT…NASF), 112-146 (DKQT…DPNV), 150-179 (RLMT…EVNT), 183-212 (NGYT…NKML), and 216-245 (DGKL…PLEG). Positions 274 to 336 (SYAAFGDLEV…KILAALKELE (63 aa)) constitute an SAM domain.

In terms of assembly, interacts with DDX4, PIWIL1, RANBP9 and TDRD1.

It is found in the cytoplasm. In terms of biological role, plays a central role during spermatogenesis by repressing transposable elements and preventing their mobilization, which is essential for the germline integrity. Acts via the piRNA metabolic process, which mediates the repression of transposable elements during meiosis by forming complexes composed of piRNAs and Piwi proteins and governs the methylation and subsequent repression of transposons. Its association with pi-bodies suggests a participation in the primary piRNAs metabolic process. Required prior to the pachytene stage to facilitate the production of multiple types of piRNAs, including those associated with repeats involved in the regulation of retrotransposons. May act by mediating protein-protein interactions during germ cell maturation. The chain is Ankyrin repeat, SAM and basic leucine zipper domain-containing protein 1 (ASZ1) from Callithrix jacchus (White-tufted-ear marmoset).